The sequence spans 209 residues: Casparian strip membrane protein 1 (209 aa).

The Cytoplasmic portion of the chain corresponds to 1–46 (MEKSESTKIDVVETNKERKGKAPLLGKAPVVAAAVVHAKGGGAKRG). Residues 47-67 (IAIFDLILRIAAFASALGAAV) form a helical membrane-spanning segment. At 68–96 (AMATTEETLPFFTQFFQFEASYDDLPTFT) the chain is on the extracellular side. The chain crosses the membrane as a helical span at residues 97-117 (FFVVAMAIVVAYLVLSVPFSI). The Cytoplasmic segment spans residues 118 to 129 (VCIVRPHAVVPR). A helical transmembrane segment spans residues 130-150 (LLLIIFDTVIIALTTGAAGSS). The Extracellular segment spans residues 151–179 (AAIVYLAHNGNQDANWLAICQQFGDFCQR). The chain crosses the membrane as a helical span at residues 180 to 200 (VSGAVVAAFVTVVILIFLVVL). Residues 201 to 209 (SASALRRHH) are Cytoplasmic-facing.

Belongs to the Casparian strip membrane proteins (CASP) family. In terms of assembly, homodimer and heterodimers.

It is found in the cell membrane. Its function is as follows. Regulates membrane-cell wall junctions and localized cell wall deposition. Required for establishment of the Casparian strip membrane domain (CSD) and the subsequent formation of Casparian strips, a cell wall modification of the root endodermis that determines an apoplastic barrier between the intraorganismal apoplasm and the extraorganismal apoplasm and prevents lateral diffusion. In Nicotiana tabacum (Common tobacco), this protein is Casparian strip membrane protein 1.